Here is a 193-residue protein sequence, read N- to C-terminus: UPF0301 protein SCO2948 (193 aa).

The protein belongs to the UPF0301 (AlgH) family.

The polypeptide is UPF0301 protein SCO2948 (Streptomyces coelicolor (strain ATCC BAA-471 / A3(2) / M145)).